A 313-amino-acid chain; its full sequence is Solute carrier family 35 member E3 (313 aa).

9 consecutive transmembrane segments (helical) span residues 17 to 37 (GLLFNLLVSICIVFLNKWIYV), 40 to 60 (GFPNMSLTLVHFVVTWLGLYI), 71 to 91 (SLPLSKLLLLALSFCGFVVFT), 126 to 146 (FSVRIQLTLIPITVGVILNSY), 154 to 174 (LGMVFAALGVVVTSLYQVWVG), 187 to 206 (LLYYQAPMSSAMLLVAVPFF), 225 to 245 (LMVLLSGIIAFMVNLSIYWII), 252 to 272 (TYNMFGHFKFCITLCGGYILF), and 275 to 295 (PLSVNQGLGILCTLFGILTYT).

This sequence belongs to the TPT transporter family. SLC35E subfamily.

The protein localises to the membrane. In terms of biological role, putative transporter. In Mus musculus (Mouse), this protein is Solute carrier family 35 member E3 (Slc35e3).